We begin with the raw amino-acid sequence, 296 residues long: MTDAEVIPLTKGLAALQTALPFIVGCGSGMVATTCVQPIDTIKVRLQLADRSVLRVTTWSIARDLMVEGGILNMYQGLSAAIMRSLVYGTMRLGLFSTFEKELARRARERGTTLSFGERSLAGVGAGALAAVVGNPTEVILIRMQTDGLKPLSQQARYSSAVDALRRIASHEGVLALWKGAGPTLIRAMSINFGQLTSFSEAKNQLQEHTSLSPPVRTAVAAGIAGCLGALISQPFDFVKTRLQNQVKTSPTVGLGSGELLYKGTFDCLFKVIHKEGLFRLYRDILPYFMRIGPHS.

The next 3 helical transmembrane spans lie at 12–32, 122–142, and 219–239; these read GLAALQTALPFIVGCGSGMVA, AGVGAGALAAVVGNPTEVILI, and AVAAGIAGCLGALISQPFDFV. 3 Solcar repeats span residues 16 to 102, 114 to 205, and 213 to 296; these read LQTA…FEKE, LSFG…AKNQ, and SPPV…GPHS.

This sequence belongs to the mitochondrial carrier (TC 2.A.29) family.

The protein resides in the mitochondrion inner membrane. Its function is as follows. Solute carrier protein; part of the Fusarium detoxification of benzoxazolinone cluster involved in the degradation of benzoxazolinones produced by the host plant. Maize, wheat, and rye produce the 2 benzoxazinone phytoanticipins 2,4-dihy-droxy-7-methoxy-1,4-benzoxazin-3-one (DIMBOA) and 2,4-dihydroxy-1,4-benzoxazin-3-one (DIBOA) that, due to their inherent instability once released, spontaneously degrade to the more stable corresponding benzoxazolinones, 6-methoxy-2-benzoxazolinone (MBOA) and 2-benzoxazolinone (BOA), respectively. This Fusarium pseudograminearum (strain CS3096) (Wheat and barley crown-rot fungus) protein is Solute carrier protein FPSE_08119.